Reading from the N-terminus, the 1220-residue chain is Osmosensing histidine protein kinase SLN1 (1220 aa).

At 1-22 (MRFGLPSKLELTPPFRIGIRTQ) the chain is on the cytoplasmic side. A helical transmembrane segment spans residues 23–46 (LTALVSIVALGSLIILAVTTGVYF). Over 47–333 (TSNYKNLRSD…FLSPATKLAK (287 aa)) the chain is Extracellular. Residues N100, N138, N142, N181, N224, and N272 are each glycosylated (N-linked (GlcNAc...) asparagine). Residues 334–354 (IITGTVIAIGVFVILLTLPLA) traverse the membrane as a helical segment. The Cytoplasmic segment spans residues 355–1220 (HWAVQPIVRL…AAYQGKKNNK (866 aa)). Disordered stretches follow at residues 414–433 (GSTTSVSGHGGSGHGSGAAF) and 444–500 (NLGN…HILT). Residues 451–468 (SPPEEENKIPNNHTDAKI) are compositionally biased toward basic and acidic residues. S502 carries the phosphoserine modification. Residues 573 to 928 (NISHELRTPL…KFTFTLPLNQ (356 aa)) enclose the Histidine kinase domain. The residue at position 576 (H576) is a Phosphohistidine; by autocatalysis. 2 positions are modified to phosphoserine: S758 and S833. 2 disordered regions span residues 960 to 1016 (AKSI…DNGG) and 1040 to 1081 (NSLS…VKDD). Over residues 965–984 (SRQSTSSVATPATNRSSLTN) the composition is skewed to polar residues. Residues 988–1000 (PEVRSKGKHETKD) are compositionally biased toward basic and acidic residues. A phosphoserine mark is found at S1041 and S1044. The segment covering 1063–1075 (LQSTGTATSSRNI) has biased composition (polar residues). The 122-residue stretch at 1089-1210 (KILVVEDNHV…KLKTILTEFC (122 aa)) folds into the Response regulatory domain. The Mg(2+) site is built by E1094, D1095, D1144, and K1195. At D1144 the chain carries 4-aspartylphosphate.

In terms of assembly, interacts with DJP1, MOG1 and YPD1. The phosphorelay mechanism involves the sequential transfer of a phosphate group from His-576 (H1) in the histidine kinase domain (transmitter domain) to Asp-1144 (D1) of the response regulatory domain (receiver domain). This transfer probably occurs between two SLN1 molecules, rather than intramolecularly. The phosphate group is further transferred to 'His-64' (H2) of YPD1 and finally to 'Asp-554' (D2) of SSK1 or 'Asp-427' (D2) of SKN7.

It is found in the cell membrane. It carries out the reaction ATP + protein L-histidine = ADP + protein N-phospho-L-histidine.. Its function is as follows. Histidine kinase that acts as an osmosensor at the plasma membrane. Part of the bifurcated SLN1-YPD1-SKN7/SSK1 two-component regulatory system, which controls activity of the HOG1 pathway and gene expression in response to changes in the osmolarity of the extracellular environment. Under normal osmotic conditions, the histidine kinase autophosphorylates His-576. This phosphate is subsequently transferred to Asp-1144, from where it is relayed to 'His-64' of the phosphorelay intermediate protein YPD1. Under high osmolarity conditions, the histidine kinase is no longer active. This chain is Osmosensing histidine protein kinase SLN1 (SLN1), found in Saccharomyces cerevisiae (strain ATCC 204508 / S288c) (Baker's yeast).